We begin with the raw amino-acid sequence, 250 residues long: Menaquinol:cytochrome c reductase cytochrome c subunit (250 aa).

A run of 3 helical transmembrane segments spans residues Trp46–Ala62, Val104–Leu124, and Val137–Val157. The region spanning Asp178 to Ala250 is the Cytochrome c domain. Residues Cys192, Cys195, and His196 each coordinate heme c. Residues Met229 to Ala250 are disordered.

Belongs to the cytochrome b family. In terms of assembly, the main subunits of the menaquinol:cytochrome c complex are a Rieske-type iron-sulfur protein (QcrA), a cytochrome b (QcrB) and a cytochrome c (QcrC). It depends on heme c as a cofactor.

It localises to the cell membrane. In terms of biological role, component of the menaquinol:cytochrome c reductase complex. In Geobacillus thermodenitrificans, this protein is Menaquinol:cytochrome c reductase cytochrome c subunit (qcrC).